A 408-amino-acid polypeptide reads, in one-letter code: Histidine--tRNA ligase (408 aa).

Belongs to the class-II aminoacyl-tRNA synthetase family. In terms of assembly, homodimer.

The protein resides in the cytoplasm. The catalysed reaction is tRNA(His) + L-histidine + ATP = L-histidyl-tRNA(His) + AMP + diphosphate + H(+). In Campylobacter jejuni subsp. jejuni serotype O:23/36 (strain 81-176), this protein is Histidine--tRNA ligase.